We begin with the raw amino-acid sequence, 899 residues long: Lipoxygenase 2, chloroplastic (899 aa).

Residues 1-57 (MLKPQIHKPHLVNKLPLGTPFIPSHASIASFSTTSLRTLSVQKCYRRYIRYTSSNIK) constitute a chloroplast transit peptide. One can recognise a PLAT domain in the interval 83–203 (ALTAVTVGLL…DNPDKRIFFL (121 aa)). One can recognise a Lipoxygenase domain in the interval 206-899 (SYLPSETPEG…GKGVPYSISI (694 aa)). The interval 252–286 (DPDTDSDMARPVLGGNEHPFPRRCRTGRKMTSTEP) is disordered. Fe cation-binding residues include histidine 557, histidine 562, histidine 749, asparagine 753, and isoleucine 899.

Belongs to the lipoxygenase family. Requires Fe cation as cofactor. Confined to glandular trichomes in flowers.

Its subcellular location is the plastid. The protein localises to the chloroplast. It participates in lipid metabolism; oxylipin biosynthesis. Functionally, plant lipoxygenases may be involved in a number of diverse aspects of plant physiology including growth and development, pest resistance, and senescence or responses to wounding. Catalyzes the hydroperoxidation of lipids containing a cis,cis-1,4-pentadiene structure. This Tanacetum cinerariifolium (Dalmatian daisy) protein is Lipoxygenase 2, chloroplastic.